The sequence spans 508 residues: Endoglucanase 6 (508 aa).

Residues 1 to 33 (MLAASLRVEAVAVVAAAVLVLLLSPAAVVVVAG) form the signal peptide. Asp-89 functions as the Nucleophile in the catalytic mechanism. Catalysis depends on residues His-419, Asp-471, and Glu-480.

It belongs to the glycosyl hydrolase 9 (cellulase E) family.

Its subcellular location is the secreted. It carries out the reaction Endohydrolysis of (1-&gt;4)-beta-D-glucosidic linkages in cellulose, lichenin and cereal beta-D-glucans.. This Oryza sativa subsp. japonica (Rice) protein is Endoglucanase 6.